Reading from the N-terminus, the 389-residue chain is Succinate--CoA ligase [ADP-forming] subunit beta (389 aa).

One can recognise an ATP-grasp domain in the interval 9–244; the sequence is KQLLAEYGIP…KTQEDETEVT (236 aa). Residues Lys46, 53–55, Gly102, and Glu107 each bind ATP; that span reads GRG. Residues Asn199 and Asp213 each contribute to the Mg(2+) site. Residues Asn264 and 321 to 323 each bind substrate; that span reads GIV.

This sequence belongs to the succinate/malate CoA ligase beta subunit family. As to quaternary structure, heterotetramer of two alpha and two beta subunits. Requires Mg(2+) as cofactor.

It catalyses the reaction succinate + ATP + CoA = succinyl-CoA + ADP + phosphate. The enzyme catalyses GTP + succinate + CoA = succinyl-CoA + GDP + phosphate. It functions in the pathway carbohydrate metabolism; tricarboxylic acid cycle; succinate from succinyl-CoA (ligase route): step 1/1. In terms of biological role, succinyl-CoA synthetase functions in the citric acid cycle (TCA), coupling the hydrolysis of succinyl-CoA to the synthesis of either ATP or GTP and thus represents the only step of substrate-level phosphorylation in the TCA. The beta subunit provides nucleotide specificity of the enzyme and binds the substrate succinate, while the binding sites for coenzyme A and phosphate are found in the alpha subunit. In Xanthomonas oryzae pv. oryzae (strain MAFF 311018), this protein is Succinate--CoA ligase [ADP-forming] subunit beta.